A 407-amino-acid chain; its full sequence is Imidazolonepropionase (407 aa).

Fe(3+) is bound by residues H68 and H70. Zn(2+) is bound by residues H68 and H70. 4-imidazolone-5-propanoate-binding residues include R77, Y140, and H173. Y140 serves as a coordination point for N-formimidoyl-L-glutamate. H238 serves as a coordination point for Fe(3+). H238 lines the Zn(2+) pocket. Q241 lines the 4-imidazolone-5-propanoate pocket. D313 is a Fe(3+) binding site. D313 contributes to the Zn(2+) binding site. N315 and G317 together coordinate N-formimidoyl-L-glutamate. T318 is a binding site for 4-imidazolone-5-propanoate.

Belongs to the metallo-dependent hydrolases superfamily. HutI family. Requires Zn(2+) as cofactor. The cofactor is Fe(3+).

It is found in the cytoplasm. It catalyses the reaction 4-imidazolone-5-propanoate + H2O = N-formimidoyl-L-glutamate. It participates in amino-acid degradation; L-histidine degradation into L-glutamate; N-formimidoyl-L-glutamate from L-histidine: step 3/3. Its function is as follows. Catalyzes the hydrolytic cleavage of the carbon-nitrogen bond in imidazolone-5-propanoate to yield N-formimidoyl-L-glutamate. It is the third step in the universal histidine degradation pathway. The polypeptide is Imidazolonepropionase (Burkholderia lata (strain ATCC 17760 / DSM 23089 / LMG 22485 / NCIMB 9086 / R18194 / 383)).